A 954-amino-acid chain; its full sequence is Bifunctional glutamine synthetase adenylyltransferase/adenylyl-removing enzyme (954 aa).

Positions 1 to 450 are adenylyl removase; the sequence is MENISNKPLS…HFIETVGGRT (450 aa). Residues 454–954 form an adenylyl transferase region; it reads GADLWTQQLW…MDIYQRILVD (501 aa).

The protein belongs to the GlnE family. Mg(2+) is required as a cofactor.

It catalyses the reaction [glutamine synthetase]-O(4)-(5'-adenylyl)-L-tyrosine + phosphate = [glutamine synthetase]-L-tyrosine + ADP. The enzyme catalyses [glutamine synthetase]-L-tyrosine + ATP = [glutamine synthetase]-O(4)-(5'-adenylyl)-L-tyrosine + diphosphate. Involved in the regulation of glutamine synthetase GlnA, a key enzyme in the process to assimilate ammonia. When cellular nitrogen levels are high, the C-terminal adenylyl transferase (AT) inactivates GlnA by covalent transfer of an adenylyl group from ATP to specific tyrosine residue of GlnA, thus reducing its activity. Conversely, when nitrogen levels are low, the N-terminal adenylyl removase (AR) activates GlnA by removing the adenylyl group by phosphorolysis, increasing its activity. The regulatory region of GlnE binds the signal transduction protein PII (GlnB) which indicates the nitrogen status of the cell. This Shewanella woodyi (strain ATCC 51908 / MS32) protein is Bifunctional glutamine synthetase adenylyltransferase/adenylyl-removing enzyme.